We begin with the raw amino-acid sequence, 110 residues long: Insulin-1 (110 aa).

An N-terminal signal peptide occupies residues 1 to 24; that stretch reads MALWMRFLPLLALLVLWEPKPAQA. Cystine bridges form between C31–C96, C43–C109, and C95–C100. The propeptide at 57 to 87 is c peptide; sequence EVEDPQVPQLELGGGPEAGDLQTLALEVARQ.

It belongs to the insulin family. As to quaternary structure, heterodimer of a B chain and an A chain linked by two disulfide bonds.

The protein resides in the secreted. Functionally, insulin decreases blood glucose concentration. It increases cell permeability to monosaccharides, amino acids and fatty acids. It accelerates glycolysis, the pentose phosphate cycle, and glycogen synthesis in liver. The protein is Insulin-1 (Ins1) of Rattus norvegicus (Rat).